We begin with the raw amino-acid sequence, 365 residues long: uncharacterized protein (365 aa).

This is an uncharacterized protein from Archaeoglobus fulgidus (strain ATCC 49558 / DSM 4304 / JCM 9628 / NBRC 100126 / VC-16).